A 380-amino-acid chain; its full sequence is Chaperone protein DnaJ (380 aa).

The 68-residue stretch at 5 to 72 (DYYETLGVAK…QKRAAYDQYG (68 aa)) folds into the J domain. The segment at 140-218 (GKDTQIRIPS…CNGAGRIKSN (79 aa)) adopts a CR-type zinc-finger fold. 8 residues coordinate Zn(2+): Cys-153, Cys-156, Cys-170, Cys-173, Cys-192, Cys-195, Cys-206, and Cys-209. CXXCXGXG motif repeat units lie at residues 153 to 160 (CSTCDGTG), 170 to 177 (CPTCSGSG), 192 to 199 (CPSCHGTG), and 206 to 213 (CTACNGAG). Residues 357–380 (LKKGGERHSPNAKSWTDRVKDLFK) are disordered.

The protein belongs to the DnaJ family. Homodimer. Requires Zn(2+) as cofactor.

It localises to the cytoplasm. Functionally, participates actively in the response to hyperosmotic and heat shock by preventing the aggregation of stress-denatured proteins and by disaggregating proteins, also in an autonomous, DnaK-independent fashion. Unfolded proteins bind initially to DnaJ; upon interaction with the DnaJ-bound protein, DnaK hydrolyzes its bound ATP, resulting in the formation of a stable complex. GrpE releases ADP from DnaK; ATP binding to DnaK triggers the release of the substrate protein, thus completing the reaction cycle. Several rounds of ATP-dependent interactions between DnaJ, DnaK and GrpE are required for fully efficient folding. Also involved, together with DnaK and GrpE, in the DNA replication of plasmids through activation of initiation proteins. This Methylibium petroleiphilum (strain ATCC BAA-1232 / LMG 22953 / PM1) protein is Chaperone protein DnaJ.